A 533-amino-acid chain; its full sequence is uncharacterized protein (533 aa).

4 stretches are compositionally biased toward polar residues: residues 30–43 (SQQG…VKNH), 79–91 (NAGT…THLS), 231–247 (NVKS…SSSA), and 254–263 (GRQSNSPNSN). Disordered stretches follow at residues 30-92 (SQQG…HLSA) and 221-274 (SLSP…PGAS). Residue S336 is modified to Phosphoserine. The segment at 475 to 510 (HPSLSNSAASPPVSSPGLRRSHIPVHEGLKHTRDGV) is disordered. Residues 476–490 (PSLSNSAASPPVSSP) are compositionally biased toward low complexity. Residues 498-510 (PVHEGLKHTRDGV) are compositionally biased toward basic and acidic residues.

Its subcellular location is the nucleus. This is an uncharacterized protein from Schizosaccharomyces pombe (strain 972 / ATCC 24843) (Fission yeast).